The sequence spans 124 residues: NADH-quinone oxidoreductase subunit A (124 aa).

3 helical membrane passes run 11–31, 68–88, and 93–113; these read YLPI…IMIL, LVAI…PWAI, and IGKI…IGFV.

This sequence belongs to the complex I subunit 3 family. As to quaternary structure, NDH-1 is composed of 14 different subunits. Subunits NuoA, H, J, K, L, M, N constitute the membrane sector of the complex.

The protein localises to the cell inner membrane. The catalysed reaction is a quinone + NADH + 5 H(+)(in) = a quinol + NAD(+) + 4 H(+)(out). In terms of biological role, NDH-1 shuttles electrons from NADH, via FMN and iron-sulfur (Fe-S) centers, to quinones in the respiratory chain. The immediate electron acceptor for the enzyme in this species is believed to be ubiquinone. Couples the redox reaction to proton translocation (for every two electrons transferred, four hydrogen ions are translocated across the cytoplasmic membrane), and thus conserves the redox energy in a proton gradient. This Rickettsia bellii (strain RML369-C) protein is NADH-quinone oxidoreductase subunit A.